The following is a 110-amino-acid chain: Large ribosomal subunit protein uL22 (110 aa).

Belongs to the universal ribosomal protein uL22 family. Part of the 50S ribosomal subunit.

Its function is as follows. This protein binds specifically to 23S rRNA; its binding is stimulated by other ribosomal proteins, e.g. L4, L17, and L20. It is important during the early stages of 50S assembly. It makes multiple contacts with different domains of the 23S rRNA in the assembled 50S subunit and ribosome. Functionally, the globular domain of the protein is located near the polypeptide exit tunnel on the outside of the subunit, while an extended beta-hairpin is found that lines the wall of the exit tunnel in the center of the 70S ribosome. This is Large ribosomal subunit protein uL22 from Verminephrobacter eiseniae (strain EF01-2).